Here is a 537-residue protein sequence, read N- to C-terminus: Eukaryotic translation initiation factor 3 subunit L (537 aa).

Positions 1 to 19 are enriched in basic and acidic residues; it reads MSRRVEFDMSHEDHTDRRR. The interval 1–28 is disordered; that stretch reads MSRRVEFDMSHEDHTDRRRTNTFSSEED. A PCI domain is found at 297 to 485; it reads EATKMFVNCL…GPSTVDDDEP (189 aa).

This sequence belongs to the eIF-3 subunit L family. As to quaternary structure, component of the eukaryotic translation initiation factor 3 (eIF-3) complex.

It localises to the cytoplasm. Functionally, component of the eukaryotic translation initiation factor 3 (eIF-3) complex, which is involved in protein synthesis of a specialized repertoire of mRNAs and, together with other initiation factors, stimulates binding of mRNA and methionyl-tRNAi to the 40S ribosome. The eIF-3 complex specifically targets and initiates translation of a subset of mRNAs involved in cell proliferation. The sequence is that of Eukaryotic translation initiation factor 3 subunit L from Caenorhabditis briggsae.